The following is a 114-amino-acid chain: Flagellar hook-basal body complex protein FliE (114 aa).

This sequence belongs to the FliE family.

It is found in the bacterial flagellum basal body. This chain is Flagellar hook-basal body complex protein FliE, found in Burkholderia cenocepacia (strain ATCC BAA-245 / DSM 16553 / LMG 16656 / NCTC 13227 / J2315 / CF5610) (Burkholderia cepacia (strain J2315)).